A 175-amino-acid chain; its full sequence is Albumin-1 (175 aa).

Cys-135 and Cys-141 are joined by a disulfide.

It belongs to the protease inhibitor I3 (leguminous Kunitz-type inhibitor) family.

In terms of biological role, 2S seed storage protein. In Psophocarpus tetragonolobus (Winged bean), this protein is Albumin-1.